We begin with the raw amino-acid sequence, 428 residues long: Dihydrolipoyllysine-residue acetyltransferase component of pyruvate dehydrogenase complex (428 aa).

The Lipoyl-binding domain occupies 2–77 (AFEFKLPDIG…TVGQTLITLD (76 aa)). The residue at position 43 (Lys43) is an N6-lipoyllysine. A disordered region spans residues 88-123 (GQEQEEAKKEEKTETVSKEEKVDAVAPNAPAAEAEA). Residues 89–110 (QEQEEAKKEEKTETVSKEEKVD) are compositionally biased toward basic and acidic residues. Positions 111–123 (AVAPNAPAAEAEA) are enriched in low complexity. Positions 130 to 167 (IAMPSVRKYAREKGVDIRLVQGTGKNGRVLKEDIDAFL) constitute a Peripheral subunit-binding (PSBD) domain. Residues 177–194 (AAEEKAAPAAAKPATTEG) show a composition bias toward low complexity. The interval 177–201 (AAEEKAAPAAAKPATTEGEFPETRE) is disordered. His399 is a catalytic residue.

The protein belongs to the 2-oxoacid dehydrogenase family. As to quaternary structure, forms a 60-polypeptide structural core with icosahedral symmetry. (R)-lipoate serves as cofactor.

The catalysed reaction is N(6)-[(R)-dihydrolipoyl]-L-lysyl-[protein] + acetyl-CoA = N(6)-[(R)-S(8)-acetyldihydrolipoyl]-L-lysyl-[protein] + CoA. Its function is as follows. The pyruvate dehydrogenase complex catalyzes the overall conversion of pyruvate to acetyl-CoA and CO(2). It contains multiple copies of three enzymatic components: pyruvate dehydrogenase (E1), dihydrolipoamide acetyltransferase (E2) and lipoamide dehydrogenase (E3). This Geobacillus stearothermophilus (Bacillus stearothermophilus) protein is Dihydrolipoyllysine-residue acetyltransferase component of pyruvate dehydrogenase complex (pdhC).